Reading from the N-terminus, the 451-residue chain is Deoxyguanosinetriphosphate triphosphohydrolase-like protein (451 aa).

One can recognise an HD domain in the interval 61–274; that stretch reads RLTHSLEVAQ…MELADDIAYG (214 aa).

It belongs to the dGTPase family. Type 2 subfamily.

This Actinobacillus succinogenes (strain ATCC 55618 / DSM 22257 / CCUG 43843 / 130Z) protein is Deoxyguanosinetriphosphate triphosphohydrolase-like protein.